The chain runs to 167 residues: Endoribonuclease YbeY (167 aa).

3 residues coordinate Zn(2+): His131, His135, and His141.

Belongs to the endoribonuclease YbeY family. Zn(2+) serves as cofactor.

It is found in the cytoplasm. Functionally, single strand-specific metallo-endoribonuclease involved in late-stage 70S ribosome quality control and in maturation of the 3' terminus of the 16S rRNA. This Rickettsia rickettsii (strain Sheila Smith) protein is Endoribonuclease YbeY.